The primary structure comprises 408 residues: MNLSKINTLLIASFFLFLTATVISHPQASFEASKTGLSMWWEVVFPSLLPFFILSELLIGFGIVRFVGVLLEPFMRPIFRVPGVGGFVLAMGMASGNPAGAKLTARLRQENQISRVEAERLASFTNSSNPLFIFGAVAVGFFQNASLGILLASAHYLGNLAVGLTMRSYGRKEEQHLRRKKTIPFPSVKDALHALHTARLAEKRPLGKILGDAVTSSVQTLLMVGGFIILFSVFNRLLSVVQLTDVLSVFTKGALTLFQLPTQLDIPLLSGMFEITLGSKLVSETDVSLLQKAIIVSFILGFSGFSVQAQVAGILSETDIRFKPFFIARLLQGVYAAVFVMLLWKPLYTAWHDPYQYVFKSLNSSDMSTAFINGWNLLVQIGPAVTLCALFTYIIIFSYRLTNGTKKG.

8 helical membrane passes run 6–26 (INTL…ISHP), 43–63 (VVFP…GFGI), 81–101 (VPGV…PAGA), 131–151 (LFIF…GILL), 214–234 (VTSS…FSVF), 294–314 (IIVS…VAGI), 324–344 (PFFI…MLLW), and 377–397 (LLVQ…IIIF).

The protein resides in the cell membrane. Required for spore cortex formation. This Bacillus subtilis (strain 168) protein is Sporulation integral membrane protein YlbJ (ylbJ).